The chain runs to 51 residues: Insulin (51 aa).

3 cysteine pairs are disulfide-bonded: cysteine 7-cysteine 37, cysteine 19-cysteine 50, and cysteine 36-cysteine 41.

This sequence belongs to the insulin family. In terms of assembly, heterodimer of a B chain and an A chain linked by two disulfide bonds.

It is found in the secreted. Its function is as follows. Insulin decreases blood glucose concentration. It increases cell permeability to monosaccharides, amino acids and fatty acids. It accelerates glycolysis, the pentose phosphate cycle, and glycogen synthesis in liver. The protein is Insulin (INS) of Meleagris gallopavo (Wild turkey).